The chain runs to 694 residues: Rabphilin-3A (694 aa).

Residues 1 to 12 show a composition bias toward polar residues; that stretch reads MTDTVFSNSSNR. Residues 1–51 form a disordered region; sequence MTDTVFSNSSNRWMYPSDRPLQSNDKEQLQAGWSVHPGGQPDRQRKQEELT. Residues 44 to 160 form the RabBD domain; it reads QRKQEELTDE…KRSGAWFFKG (117 aa). The segment at 92–148 adopts an FYVE-type zinc-finger fold; that stretch reads GDGVNRCILCGEQLGMLGSACVVCEDCKKNVCTKCGVETNNRLHSVWLCKICIEQRE. Zn(2+)-binding residues include Cys98, Cys101, Cys115, Cys118, Cys123, Cys126, Cys140, and Cys143. The segment at 166–388 is disordered; sequence LPQPMPIKKT…EEEANSYDSD (223 aa). The span at 177-186 shows a compositional bias: low complexity; it reads PQQPVSEPAA. Basic and acidic residues predominate over residues 202 to 211; the sequence is ARGDSEDRRG. Arg226 carries the omega-N-methylarginine modification. Phosphoserine is present on Ser272. A compositionally biased stretch (low complexity) spans 352–370; sequence PSGPYSQASAAAPQPAAAR. Residues 375-388 show a composition bias toward acidic residues; it reads PEEEEEEANSYDSD. A C2 1 domain is found at 392-514; the sequence is TLGALEFSLL…KPNQRKNFNI (123 aa). Ca(2+) contacts are provided by Met422, Asp423, Asp429, Asp484, Glu485, Asp486, Glu492, Glu539, Asp581, Asp587, Asp641, Tyr642, Asp643, and Asp649. A C2 2 domain is found at 550–683; sequence ERGKILVSLM…NKDKKIERWH (134 aa). Phosphoserine occurs at positions 692 and 693.

Interacts with RAB3B, RAB3C, RAB3D, RAB8A, RAB27A and RAB27B. Interacts with RAB3A; this interaction recruits RPH3A to synaptic vesicules. Interacts (via C2B domain) with SNAP25. Interacts with deubiquitinating enzyme CAND1; this interaction results in the deubiquitination of RPH3A. Interacts with GRIN2A and DLG4; this ternary complex regulates NMDA receptor composition at postsynaptic membranes. Interacts with SNCA. Ca(2+) serves as cofactor. In terms of processing, ubiquitinated. Deubiquitinated by CAND1 to prevent its degradation.

The protein localises to the cytoplasmic vesicle. It is found in the secretory vesicle. The protein resides in the synaptic vesicle membrane. Its subcellular location is the cell projection. It localises to the dendritic spine. The protein localises to the postsynaptic cell membrane. It is found in the membrane. Its function is as follows. Plays an essential role in docking and fusion steps of regulated exocytosis. At the presynaptic level, RPH3A is recruited by RAB3A to the synaptic vesicle membrane in a GTP-dependent manner where it modulates synaptic vesicle trafficking and calcium-triggered neurotransmitter release. In the post-synaptic compartment, forms a ternary complex with GRIN2A and DLG4 and regulates NMDA receptor stability. Also plays a role in the exocytosis of arginine vasopressin hormone. The protein is Rabphilin-3A (RPH3A) of Homo sapiens (Human).